A 422-amino-acid polypeptide reads, in one-letter code: MINPHLLDELTRRGLVAQNSDPVALADHLATPRTVYCGFDPTAGSLHIGHLVPLLMLRRFQLAGHTPVALVGGATGLIGDPSFKATERNLNSSETVQGWVASLSAQIKALLPASEGLAAPLLVNNADWMGQMSALDFLRDIGKHFSVNAMLVRESVRQRLARPDQGISFTEFSYALLQSQDYAVLNQRLGCTLQIGGNDQWGNITSGMDLTRRLHQAQVYGMTLPLITKADGTKFGKTEGGAIWLDPALTSPYAFYQFWLGTADEDVYRFLRYYSFMPLTEIEALEAEDAKRQGRKLAQQVLADELTELVHGKGALAAAQRISELLFSGEVARLGESDLAQLAQDGMPGWRIEGETDLVTLLVESGLANSKRIARELLAAGAISLNGEIRREEPLRAADRLFGRHLLLRRGKKQYRLVTWQG.

Tyr36 lines the L-tyrosine pocket. Residues 41–50 (PTAGSLHIGH) carry the 'HIGH' region motif. Tyr174 and Gln178 together coordinate L-tyrosine. Residues 234–238 (KFGKT) carry the 'KMSKS' region motif. Lys237 provides a ligand contact to ATP. Positions 356-420 (TDLVTLLVES…GKKQYRLVTW (65 aa)) constitute an S4 RNA-binding domain.

Belongs to the class-I aminoacyl-tRNA synthetase family. TyrS type 1 subfamily. As to quaternary structure, homodimer.

The protein resides in the cytoplasm. It catalyses the reaction tRNA(Tyr) + L-tyrosine + ATP = L-tyrosyl-tRNA(Tyr) + AMP + diphosphate + H(+). Its function is as follows. Catalyzes the attachment of tyrosine to tRNA(Tyr) in a two-step reaction: tyrosine is first activated by ATP to form Tyr-AMP and then transferred to the acceptor end of tRNA(Tyr). The polypeptide is Tyrosine--tRNA ligase (Aeromonas hydrophila subsp. hydrophila (strain ATCC 7966 / DSM 30187 / BCRC 13018 / CCUG 14551 / JCM 1027 / KCTC 2358 / NCIMB 9240 / NCTC 8049)).